The sequence spans 95 residues: Protein TusB (95 aa).

It belongs to the DsrH/TusB family. In terms of assembly, heterohexamer, formed by a dimer of trimers. The hexameric TusBCD complex contains 2 copies each of TusB, TusC and TusD. The TusBCD complex interacts with TusE.

The protein resides in the cytoplasm. Functionally, part of a sulfur-relay system required for 2-thiolation of 5-methylaminomethyl-2-thiouridine (mnm(5)s(2)U) at tRNA wobble positions. This is Protein TusB from Buchnera aphidicola subsp. Acyrthosiphon pisum (strain 5A).